A 207-amino-acid chain; its full sequence is Dephospho-CoA kinase (207 aa).

Residues 4–203 (VIGLTGGIAS…EEGYIEKPNY (200 aa)) enclose the DPCK domain. ATP is bound at residue 12–17 (ASGKST).

Belongs to the CoaE family.

It localises to the cytoplasm. The enzyme catalyses 3'-dephospho-CoA + ATP = ADP + CoA + H(+). The protein operates within cofactor biosynthesis; coenzyme A biosynthesis; CoA from (R)-pantothenate: step 5/5. In terms of biological role, catalyzes the phosphorylation of the 3'-hydroxyl group of dephosphocoenzyme A to form coenzyme A. This is Dephospho-CoA kinase from Staphylococcus aureus (strain bovine RF122 / ET3-1).